The sequence spans 507 residues: Probable cytosol aminopeptidase (507 aa).

2 residues coordinate Mn(2+): Lys275 and Asp280. Residue Lys287 is part of the active site. Residues Asp298, Asp357, and Glu359 each coordinate Mn(2+). Residue Arg361 is part of the active site.

The protein belongs to the peptidase M17 family. It depends on Mn(2+) as a cofactor.

The protein resides in the cytoplasm. It carries out the reaction Release of an N-terminal amino acid, Xaa-|-Yaa-, in which Xaa is preferably Leu, but may be other amino acids including Pro although not Arg or Lys, and Yaa may be Pro. Amino acid amides and methyl esters are also readily hydrolyzed, but rates on arylamides are exceedingly low.. It catalyses the reaction Release of an N-terminal amino acid, preferentially leucine, but not glutamic or aspartic acids.. In terms of biological role, presumably involved in the processing and regular turnover of intracellular proteins. Catalyzes the removal of unsubstituted N-terminal amino acids from various peptides. This chain is Probable cytosol aminopeptidase, found in Acidobacterium capsulatum (strain ATCC 51196 / DSM 11244 / BCRC 80197 / JCM 7670 / NBRC 15755 / NCIMB 13165 / 161).